The chain runs to 218 residues: Kynurenine formamidase (218 aa).

Tryptophan 27 provides a ligand contact to substrate. Zn(2+)-binding residues include histidine 57, histidine 61, and aspartate 63. The Proton donor/acceptor role is filled by histidine 67. Zn(2+) is bound by residues histidine 169 and glutamate 181.

It belongs to the Cyclase 1 superfamily. KynB family. Homodimer. Requires Zn(2+) as cofactor.

It carries out the reaction N-formyl-L-kynurenine + H2O = L-kynurenine + formate + H(+). It functions in the pathway amino-acid degradation; L-tryptophan degradation via kynurenine pathway; L-kynurenine from L-tryptophan: step 2/2. With respect to regulation, inhibited by EDTA. Insensitive to phenylmethylsulfonyl fluoride (PMSF). Functionally, catalyzes the hydrolysis of N-formyl-L-kynurenine to L-kynurenine, the second step in the kynurenine pathway of tryptophan degradation. The polypeptide is Kynurenine formamidase (Cupriavidus metallidurans (strain ATCC 43123 / DSM 2839 / NBRC 102507 / CH34) (Ralstonia metallidurans)).